A 137-amino-acid polypeptide reads, in one-letter code: Small ribosomal subunit protein uS12 (137 aa).

The interval 1 to 57 (MPTINQLVRKPRKSKVEKPKSPALNVGYNSHKKVQTNVSSPQKRGVATRVGTMTPRK) is disordered. 3-methylthioaspartic acid is present on D102.

Belongs to the universal ribosomal protein uS12 family. Part of the 30S ribosomal subunit. Contacts proteins S8 and S17. May interact with IF1 in the 30S initiation complex.

Its function is as follows. With S4 and S5 plays an important role in translational accuracy. In terms of biological role, interacts with and stabilizes bases of the 16S rRNA that are involved in tRNA selection in the A site and with the mRNA backbone. Located at the interface of the 30S and 50S subunits, it traverses the body of the 30S subunit contacting proteins on the other side and probably holding the rRNA structure together. The combined cluster of proteins S8, S12 and S17 appears to hold together the shoulder and platform of the 30S subunit. This chain is Small ribosomal subunit protein uS12, found in Streptococcus pneumoniae (strain Hungary19A-6).